A 362-amino-acid chain; its full sequence is Phosphoserine aminotransferase (362 aa).

2 residues coordinate L-glutamate: Ser-9 and Arg-42. Pyridoxal 5'-phosphate-binding positions include 76–77, Trp-102, Thr-153, Asp-174, and Gln-197; that span reads GR. Position 198 is an N6-(pyridoxal phosphate)lysine (Lys-198). Residue 239–240 coordinates pyridoxal 5'-phosphate; sequence NT.

The protein belongs to the class-V pyridoxal-phosphate-dependent aminotransferase family. SerC subfamily. Homodimer. The cofactor is pyridoxal 5'-phosphate.

The protein resides in the cytoplasm. The enzyme catalyses O-phospho-L-serine + 2-oxoglutarate = 3-phosphooxypyruvate + L-glutamate. It catalyses the reaction 4-(phosphooxy)-L-threonine + 2-oxoglutarate = (R)-3-hydroxy-2-oxo-4-phosphooxybutanoate + L-glutamate. The protein operates within amino-acid biosynthesis; L-serine biosynthesis; L-serine from 3-phospho-D-glycerate: step 2/3. Its pathway is cofactor biosynthesis; pyridoxine 5'-phosphate biosynthesis; pyridoxine 5'-phosphate from D-erythrose 4-phosphate: step 3/5. Its function is as follows. Catalyzes the reversible conversion of 3-phosphohydroxypyruvate to phosphoserine and of 3-hydroxy-2-oxo-4-phosphonooxybutanoate to phosphohydroxythreonine. The protein is Phosphoserine aminotransferase of Escherichia coli O7:K1 (strain IAI39 / ExPEC).